The sequence spans 602 residues: 4-hydroxy-3-methylbut-2-en-1-yl diphosphate synthase (flavodoxin) (602 aa).

Residues Cys-508, Cys-511, Cys-543, and Glu-550 each coordinate [4Fe-4S] cluster.

The protein belongs to the IspG family. [4Fe-4S] cluster is required as a cofactor.

It carries out the reaction (2E)-4-hydroxy-3-methylbut-2-enyl diphosphate + oxidized [flavodoxin] + H2O + 2 H(+) = 2-C-methyl-D-erythritol 2,4-cyclic diphosphate + reduced [flavodoxin]. It participates in isoprenoid biosynthesis; isopentenyl diphosphate biosynthesis via DXP pathway; isopentenyl diphosphate from 1-deoxy-D-xylulose 5-phosphate: step 5/6. Its function is as follows. Converts 2C-methyl-D-erythritol 2,4-cyclodiphosphate (ME-2,4cPP) into 1-hydroxy-2-methyl-2-(E)-butenyl 4-diphosphate. This chain is 4-hydroxy-3-methylbut-2-en-1-yl diphosphate synthase (flavodoxin), found in Chlamydia trachomatis serovar L2 (strain ATCC VR-902B / DSM 19102 / 434/Bu).